The sequence spans 505 residues: 2,3-bisphosphoglycerate-independent phosphoglycerate mutase (505 aa).

Residues Asp11 and Ser61 each contribute to the Mn(2+) site. Residue Ser61 is the Phosphoserine intermediate of the active site. Substrate contacts are provided by residues His122, Arg152 to Asp153, Arg184, Arg190, Arg258 to Arg261, and Lys331. 5 residues coordinate Mn(2+): Asp396, His400, Asp437, His438, and His455.

Belongs to the BPG-independent phosphoglycerate mutase family. Monomer. Requires Mn(2+) as cofactor.

The enzyme catalyses (2R)-2-phosphoglycerate = (2R)-3-phosphoglycerate. It functions in the pathway carbohydrate degradation; glycolysis; pyruvate from D-glyceraldehyde 3-phosphate: step 3/5. Catalyzes the interconversion of 2-phosphoglycerate and 3-phosphoglycerate. The chain is 2,3-bisphosphoglycerate-independent phosphoglycerate mutase from Mesomycoplasma hyopneumoniae (strain J / ATCC 25934 / NCTC 10110) (Mycoplasma hyopneumoniae).